The following is a 377-amino-acid chain: Succinyl-diaminopimelate desuccinylase (377 aa).

Zn(2+) is bound at residue His66. Asp68 is an active-site residue. A Zn(2+)-binding site is contributed by Asp99. Residue Glu133 is the Proton acceptor of the active site. Zn(2+)-binding residues include Glu134, Glu162, and His348.

This sequence belongs to the peptidase M20A family. DapE subfamily. As to quaternary structure, homodimer. It depends on Zn(2+) as a cofactor. Co(2+) is required as a cofactor.

It catalyses the reaction N-succinyl-(2S,6S)-2,6-diaminopimelate + H2O = (2S,6S)-2,6-diaminopimelate + succinate. Its pathway is amino-acid biosynthesis; L-lysine biosynthesis via DAP pathway; LL-2,6-diaminopimelate from (S)-tetrahydrodipicolinate (succinylase route): step 3/3. In terms of biological role, catalyzes the hydrolysis of N-succinyl-L,L-diaminopimelic acid (SDAP), forming succinate and LL-2,6-diaminopimelate (DAP), an intermediate involved in the bacterial biosynthesis of lysine and meso-diaminopimelic acid, an essential component of bacterial cell walls. In Xylella fastidiosa (strain M23), this protein is Succinyl-diaminopimelate desuccinylase.